The sequence spans 610 residues: MAAGLLPSARAVLALLFLGLALLSVGPAPAQALHNVTAELFGGEAWGTLAAFGDLNSDKQTDLFVLRERNDLIVFLADQSAPYFKPKVKVSLKNFSALVTSVVPGDYDGDSQMDVLLTYFPQNHSNNELGAVIFWGQNQTLDPKNMTILNRTFHDQPLIMDFNGDLIPDVFAITNESSQPQILLGGDLSWHPALTTKSKMRDPHSRAFIDLTEDFTADLFLTTLSASNTFQFEIWENLGGNFSIRSVFEKPKNLVVVGQSAFADFDGDGHMDHLLPGCEDKDCQKSAIYLMRSGTGQWAPVLQDSSNKGTLWGFVPFVHEERPTAIPVPLTLHIGDYNMDGYPDALAILKNTSGSNQQAFLLENVPCNNASCEEVHRMFKVYWDLAGLNLIKDAMVATFFDIYEDGTLDIIVLSKGYTKSDVAIHTLKNNFEADAYFVKVIVLSGLCSSDCPRKITPFGVNQPGPYIMYTTVDANGYLKNGSAGQLSQSAHLALQLPYNVLGLGRSANFLDHLFVGIPRPSGEKSIRKQEWTAIIPNSQLMVIPYPHSVPRSWSAKLYLTPSNIVLLTAVALTGVCVFILAIIAILHWQEKKADDREKRQEAHRFHFDAM.

The signal sequence occupies residues 1–32 (MAAGLLPSARAVLALLFLGLALLSVGPAPAQA). 8 N-linked (GlcNAc...) asparagine glycosylation sites follow: Asn-35, Asn-94, Asn-123, Asn-138, Asn-145, Asn-150, Asn-175, and Asn-241. The FG-GAP 1; atypical repeat unit spans residues 98-135 (LVTSVVPGDYDGDSQMDVLLTYFPQNHSNNELGAVIFW). Residues 153–183 (FHDQPLIMDFNGDLIPDVFAITNESSQPQIL) form an FG-GAP 2; atypical repeat. The FG-GAP 3; atypical repeat unit spans residues 256 to 291 (VVGQSAFADFDGDGHMDHLLPGCEDKDCQKSAIYLM). Asn-351, Asn-369, and Asn-480 each carry an N-linked (GlcNAc...) asparagine glycan. The chain crosses the membrane as a helical span at residues 564–584 (IVLLTAVALTGVCVFILAIIA).

Belongs to the TIP family. Interacts with RUVBL1, RUVBL2 and alpha-tubulin.

The protein resides in the secreted. The protein localises to the cell membrane. In terms of biological role, modulator of T-cell function. Has a protective effect in graft versus host disease model. This is T-cell immunomodulatory protein from Rattus norvegicus (Rat).